Consider the following 125-residue polypeptide: Fluoride-specific ion channel FluC (125 aa).

Helical transmembrane passes span 4–24 (PLLA…LLAV), 36–56 (GTLL…AWFA), 68–88 (LITT…LEVV), and 100–120 (VISV…GFWL). Na(+)-binding residues include Gly75 and Thr78.

Belongs to the fluoride channel Fluc/FEX (TC 1.A.43) family.

It localises to the cell inner membrane. The catalysed reaction is fluoride(in) = fluoride(out). Na(+) is not transported, but it plays an essential structural role and its presence is essential for fluoride channel function. Functionally, fluoride-specific ion channel. Important for reducing fluoride concentration in the cell, thus reducing its toxicity. This is Fluoride-specific ion channel FluC from Erwinia tasmaniensis (strain DSM 17950 / CFBP 7177 / CIP 109463 / NCPPB 4357 / Et1/99).